The primary structure comprises 308 residues: MEDAIYVAVNQDVRESKKTLLWALKNLQVKKIFLLHVHLPFSLTTSSSRLEQSEIDAIQDSELNTSVNSLYKYRDICINKGVNEKDVDTSMISGHDVGEGIVELIYQNIITNLVMGAAADPHYSRGMSITSRKAEYVSQHAPHSCKIWFICKGKLIKQRERSFYLGNPSDSFSEFSTSAEKPISKGRRRDEEEEPESPKEHPGWILEPEESPKKGRKETIEKSKSNESDEDPRLEDFKCPISMEIMRDPHVAADGFTYEAEEFRKWLRSGGRTSPKTNKPLENHNLVPNHTLRIIIKDWLEKNPNYKR.

The tract at residues 172 to 235 is disordered; sequence FSEFSTSAEK…NESDEDPRLE (64 aa). Positions 210 to 227 are enriched in basic and acidic residues; that stretch reads ESPKKGRKETIEKSKSNE. Residues 232–306 form the U-box domain; that stretch reads PRLEDFKCPI…KDWLEKNPNY (75 aa).

The enzyme catalyses S-ubiquitinyl-[E2 ubiquitin-conjugating enzyme]-L-cysteine + [acceptor protein]-L-lysine = [E2 ubiquitin-conjugating enzyme]-L-cysteine + N(6)-ubiquitinyl-[acceptor protein]-L-lysine.. The protein operates within protein modification; protein ubiquitination. In terms of biological role, functions as an E3 ubiquitin ligase. In Arabidopsis thaliana (Mouse-ear cress), this protein is U-box domain-containing protein 54 (PUB54).